Reading from the N-terminus, the 314-residue chain is Methionyl-tRNA formyltransferase (314 aa).

(6S)-5,6,7,8-tetrahydrofolate is bound at residue 112 to 115; it reads SLLP.

The protein belongs to the Fmt family.

The enzyme catalyses L-methionyl-tRNA(fMet) + (6R)-10-formyltetrahydrofolate = N-formyl-L-methionyl-tRNA(fMet) + (6S)-5,6,7,8-tetrahydrofolate + H(+). Functionally, attaches a formyl group to the free amino group of methionyl-tRNA(fMet). The formyl group appears to play a dual role in the initiator identity of N-formylmethionyl-tRNA by promoting its recognition by IF2 and preventing the misappropriation of this tRNA by the elongation apparatus. In Legionella pneumophila subsp. pneumophila (strain Philadelphia 1 / ATCC 33152 / DSM 7513), this protein is Methionyl-tRNA formyltransferase.